Here is a 373-residue protein sequence, read N- to C-terminus: MLIPFSMKNCFQLLCNCQVPAAGFKKTVKNGLILQSISNDVYQNLAVEDWIHDHMNLEGKPILFFWQNSPSVVIGRHQNPWQECNLNLMREEGIKLARRRSGGGTVYHDMGNINLTFFTTKKKYDRMENLKLIVRALNAVQPQLDVQATKRFDLLLDGQFKISGTASKIGRTTAYHHCTLLCSTDGTFLSSLLKSPYQGIRSNATASIPSLVKNLLEKDPTLTCEVLMNAVATEYAAYHQIDNHIHLINPTDETLFPGINSKAKELQTWEWIYGKTPKFSINTSFHVLYEQSHLEIKVFIDIKNGRIEICNIEAPDHWLPLEIRDKLNSSLIGSKFCPTETTMLTNILLRTCPQDHKLNSKWNILCEKIKGIM.

The N-terminal 25 residues, 1–25 (MLIPFSMKNCFQLLCNCQVPAAGFK), are a transit peptide targeting the mitochondrion. A BPL/LPL catalytic domain is found at 57-243 (LEGKPILFFW…EYAAYHQIDN (187 aa)). 4 residues coordinate (R)-lipoyl-5'-AMP: tyrosine 107, arginine 151, lysine 161, and threonine 179.

It belongs to the LplA family. In terms of tissue distribution, highly expressed in skeletal muscle and heart, moderately in kidney and pancreas, and detected at lower levels in liver, brain, placenta and lung.

It localises to the mitochondrion. The enzyme catalyses N(6)-[(R)-lipoyl]-L-lysyl-[glycine-cleavage complex H protein] + L-lysyl-[lipoyl-carrier protein] = L-lysyl-[glycine-cleavage complex H protein] + N(6)-[(R)-lipoyl]-L-lysyl-[lipoyl-carrier protein]. The catalysed reaction is (R)-lipoyl-5'-AMP + L-lysyl-[lipoyl-carrier protein] = N(6)-[(R)-lipoyl]-L-lysyl-[lipoyl-carrier protein] + AMP + 2 H(+). The protein operates within protein modification; protein lipoylation via exogenous pathway; protein N(6)-(lipoyl)lysine from lipoate: step 2/2. In terms of biological role, lipoyl amidotransferase that catalyzes the transfer of lipoyl moieties from lipoyl-protein H of the glycine cleavage system (lipoyl-GCSH) to E2 subunits of the pyruvate dehydrogenase complex (PDCE2). Unable to catalyze the transfer of octanoyl from octanoyl-GCSH to PDCE2. In vitro, it is also able to catalyze the transfer of the lipoyl group from lipoyl-AMP to the specific lysine residue of lipoyl domains of lipoate-dependent enzymes but this reaction may not be physiologically relevant. This chain is Lipoyl amidotransferase LIPT1, mitochondrial, found in Homo sapiens (Human).